Reading from the N-terminus, the 269-residue chain is MSKVIKKRVETSPRPTASSDSLQTCAGVIEYAKSISKSNAKCIECVTLNASQYANCSSISIKLTDSLSSQMTSTFIMLEGETKLYKNKSKQDRSDGYFLKIKVTAASPMLYQLLEAVYGNITHKERIPNSLHSLSAETITEKTFKDESIFINKLNGAMVEYVSTGESSILRSIEGELESLSKRERQLAKAIITPVVFYRSGTETKITFALKKLIIDREVVANVIGLSGDSERVSMTENVEEDLVRNLGLVDIDDEYDEDSDKEKPIFNV.

This sequence belongs to the orthopoxvirus OPG079 family. As to quaternary structure, homoomultimer (Potential). Interacts with the small subunit of ribonucleotide reductase.

The protein localises to the host cytoplasm. Functionally, plays an essential role in viral DNA replication. Binds to ssDNA with high affinity and localizes to cytoplasmic factories where nascent viral genomes accumulate. May disrupt loops, hairpins and other secondary structures present on ssDNA to reduce and eliminate pausing of viral DNA polymerase at specific sites during elongation. This chain is Protein OPG079 (OPG079), found in Cynomys gunnisoni (Gunnison's prairie dog).